The primary structure comprises 458 residues: Mitochondrial distribution and morphology protein 10 (458 aa).

The disordered stretch occupies residues 307–339; it reads LDQRRTEPLDAPNTNSSVFSKERVQKKQGPKED. A compositionally biased stretch (basic and acidic residues) spans 326–339; sequence SKERVQKKQGPKED.

Belongs to the MDM10 family. Component of the ER-mitochondria encounter structure (ERMES) or MDM complex, composed of MMM1, MDM10, MDM12 and MDM34. Associates with the mitochondrial outer membrane sorting assembly machinery SAM(core) complex.

It is found in the mitochondrion outer membrane. Functionally, component of the ERMES/MDM complex, which serves as a molecular tether to connect the endoplasmic reticulum and mitochondria. Components of this complex are involved in the control of mitochondrial shape and protein biogenesis and may function in phospholipid exchange. MDM10 is involved in the late assembly steps of the general translocase of the mitochondrial outer membrane (TOM complex). Functions in the TOM40-specific route of the assembly of outer membrane beta-barrel proteins, including the association of TOM40 with the receptor TOM22 and small TOM proteins. Can associate with the SAM(core) complex as well as the MDM12-MMM1 complex, both involved in late steps of the major beta-barrel assembly pathway, that is responsible for biogenesis of all outer membrane beta-barrel proteins. May act as a switch that shuttles between both complexes and channels precursor proteins into the TOM40-specific pathway. Plays a role in mitochondrial morphology and in the inheritance of mitochondria. This Lachancea thermotolerans (strain ATCC 56472 / CBS 6340 / NRRL Y-8284) (Yeast) protein is Mitochondrial distribution and morphology protein 10.